Here is a 338-residue protein sequence, read N- to C-terminus: Uroporphyrinogen decarboxylase (338 aa).

Residues Arg-23–Arg-27, Asp-72, Tyr-146, Thr-201, and His-312 contribute to the substrate site.

This sequence belongs to the uroporphyrinogen decarboxylase family. As to quaternary structure, homodimer.

It localises to the cytoplasm. The catalysed reaction is uroporphyrinogen III + 4 H(+) = coproporphyrinogen III + 4 CO2. Its pathway is porphyrin-containing compound metabolism; protoporphyrin-IX biosynthesis; coproporphyrinogen-III from 5-aminolevulinate: step 4/4. Its function is as follows. Catalyzes the decarboxylation of four acetate groups of uroporphyrinogen-III to yield coproporphyrinogen-III. The chain is Uroporphyrinogen decarboxylase from Thermodesulfovibrio yellowstonii (strain ATCC 51303 / DSM 11347 / YP87).